The sequence spans 258 residues: Cytochrome b-c1 complex subunit Rieske-1, mitochondrial (258 aa).

The N-terminal 46 residues, 1–46 (WPVRSAAPSSSAFISANHFSSDDDSSSPRSISPSLASVFLHHTRGF), are a transit peptide targeting the mitochondrion. The Mitochondrial matrix segment spans residues 47-95 (SSNSVSPAHDMGLVPDLPPTVAAIKNPTSKIVYDEHNHERYPPGDPSKR). The chain crosses the membrane as a helical span at residues 96–118 (AFAYFVLTGGRFVYASLMRLLIL). Over 119–258 (KFVLSMSASK…FLEENKLLIG (140 aa)) the chain is Mitochondrial intermembrane. Residues 161 to 256 (RRRTEDDISL…YSFLEENKLL (96 aa)) enclose the Rieske domain. [2Fe-2S] cluster-binding residues include Cys-201, His-203, Cys-220, and His-223. A disulfide bridge links Cys-206 with Cys-222.

Belongs to the Rieske iron-sulfur protein family. In terms of assembly, component of the ubiquinol-cytochrome c oxidoreductase (cytochrome b-c1 complex, complex III, CIII), a multisubunit enzyme composed of 3 respiratory subunits cytochrome b, cytochrome c1 and Rieske protein, 2 core protein subunits, and several low-molecular weight protein subunits. The complex exists as an obligatory dimer and forms supercomplexes (SCs) in the inner mitochondrial membrane with cytochrome c oxidase (complex IV, CIV). [2Fe-2S] cluster serves as cofactor.

The protein localises to the mitochondrion inner membrane. The enzyme catalyses a quinol + 2 Fe(III)-[cytochrome c](out) = a quinone + 2 Fe(II)-[cytochrome c](out) + 2 H(+)(out). Functionally, component of the ubiquinol-cytochrome c oxidoreductase, a multisubunit transmembrane complex that is part of the mitochondrial electron transport chain which drives oxidative phosphorylation. The respiratory chain contains 3 multisubunit complexes succinate dehydrogenase (complex II, CII), ubiquinol-cytochrome c oxidoreductase (cytochrome b-c1 complex, complex III, CIII) and cytochrome c oxidase (complex IV, CIV), that cooperate to transfer electrons derived from NADH and succinate to molecular oxygen, creating an electrochemical gradient over the inner membrane that drives transmembrane transport and the ATP synthase. The cytochrome b-c1 complex catalyzes electron transfer from ubiquinol to cytochrome c, linking this redox reaction to translocation of protons across the mitochondrial inner membrane, with protons being carried across the membrane as hydrogens on the quinol. In the process called Q cycle, 2 protons are consumed from the matrix, 4 protons are released into the intermembrane space and 2 electrons are passed to cytochrome c. The Rieske protein is a catalytic core subunit containing a [2Fe-2S] iron-sulfur cluster. It cycles between 2 conformational states during catalysis to transfer electrons from the quinol bound in the Q(0) site in cytochrome b to cytochrome c1. The chain is Cytochrome b-c1 complex subunit Rieske-1, mitochondrial from Nicotiana tabacum (Common tobacco).